Here is a 577-residue protein sequence, read N- to C-terminus: Autophagy-related protein 20 (577 aa).

The disordered stretch occupies residues 57-81 (GQSYVAPHSGGGRTSSGSSSSASLQ). The PX domain maps to 95–239 (GEQGRVRILE…DFLDPNNANW (145 aa)). A 1,2-diacyl-sn-glycero-3-phospho-(1D-myo-inositol-3-phosphate) contacts are provided by R131, S133, K157, and R205.

It belongs to the sorting nexin family.

It is found in the endosome membrane. The protein localises to the preautophagosomal structure membrane. Functionally, required for cytoplasm to vacuole transport (Cvt), pexophagy and mitophagy. Also involved in endoplasmic reticulum-specific autophagic process and is essential for the survival of cells subjected to severe ER stress. Functions in protein retrieval from the endocytic pathway. The sequence is that of Autophagy-related protein 20 (ATG20) from Eremothecium gossypii (strain ATCC 10895 / CBS 109.51 / FGSC 9923 / NRRL Y-1056) (Yeast).